The following is a 668-amino-acid chain: DNA ligase (668 aa).

Residues 34 to 38, 83 to 84, and Glu113 contribute to the NAD(+) site; these read DAEYD and SL. Lys115 functions as the N6-AMP-lysine intermediate in the catalytic mechanism. Positions 136, 170, 286, and 310 each coordinate NAD(+). Zn(2+) contacts are provided by Cys404, Cys407, Cys422, and Cys427. Residues 590–668 enclose the BRCT domain; sequence ESDSYFAGKT…EVKMLEELKK (79 aa).

Belongs to the NAD-dependent DNA ligase family. LigA subfamily. The cofactor is Mg(2+). Mn(2+) serves as cofactor.

The catalysed reaction is NAD(+) + (deoxyribonucleotide)n-3'-hydroxyl + 5'-phospho-(deoxyribonucleotide)m = (deoxyribonucleotide)n+m + AMP + beta-nicotinamide D-nucleotide.. DNA ligase that catalyzes the formation of phosphodiester linkages between 5'-phosphoryl and 3'-hydroxyl groups in double-stranded DNA using NAD as a coenzyme and as the energy source for the reaction. It is essential for DNA replication and repair of damaged DNA. This chain is DNA ligase, found in Bacillus pumilus (strain SAFR-032).